The following is a 106-amino-acid chain: Acidic phospholipase A2 PhTX-III (106 aa).

3 residues coordinate Ca(2+): Y23, G25, and G27. 5 disulfide bridges follow: C24/C40, C39/C75, C45/C106, C46/C68, and C55/C66. Residue H43 is part of the active site. D44 contributes to the Ca(2+) binding site. Residue D69 is part of the active site.

It depends on Ca(2+) as a cofactor. As to expression, expressed by the venom gland.

The protein resides in the secreted. The enzyme catalyses a 1,2-diacyl-sn-glycero-3-phosphocholine + H2O = a 1-acyl-sn-glycero-3-phosphocholine + a fatty acid + H(+). With respect to regulation, partially inhibited by magnesium ions and completely inhibited by zinc ions These divalent cations may act as competitive antagonists of the cofactor. Snake venom phospholipase A2 (PLA2) that induces inflammatory response, with local edema and release of cytokines IL-1 alpha, IL-6 and TNF-alpha. Does not exhibit myotoxic, anticoagulant and antibacterial effects. Release of pro-inflammatory cytokines may be due to mast cell degranulation, and edema may be induced by arachidonic acid that results from the PLA2 catalytic activity. PLA2 catalyzes the calcium-dependent hydrolysis of the 2-acyl groups in 3-sn-phosphoglycerides. This chain is Acidic phospholipase A2 PhTX-III, found in Bothrocophias hyoprora (Amazonian hognose viper).